The primary structure comprises 272 residues: Undecaprenyl-diphosphatase (272 aa).

A run of 8 helical transmembrane segments spans residues 1-21 (MSYL…FLPI), 38-58 (PGAT…VVFF), 84-104 (VRMG…GYLF), 112-132 (FRSL…LGLA), 145-165 (MTYG…VPGV), 183-203 (PVAA…SGLY), 219-239 (QTAV…AGLM), and 250-270 (FVVY…TGAI).

The protein belongs to the UppP family.

It is found in the cell membrane. It catalyses the reaction di-trans,octa-cis-undecaprenyl diphosphate + H2O = di-trans,octa-cis-undecaprenyl phosphate + phosphate + H(+). Catalyzes the dephosphorylation of undecaprenyl diphosphate (UPP). Confers resistance to bacitracin. In Clavibacter michiganensis subsp. michiganensis (strain NCPPB 382), this protein is Undecaprenyl-diphosphatase.